Reading from the N-terminus, the 141-residue chain is Hemoglobin subunit alpha (141 aa).

Residues 1–141 enclose the Globin domain; it reads VLSAADKTNV…VATVLTSKYR (141 aa). The residue at position 3 (Ser-3) is a Phosphoserine. Lys-7 is modified (N6-succinyllysine). Thr-8 is modified (phosphothreonine). An N6-succinyllysine modification is found at Lys-11. At Lys-16 the chain carries N6-acetyllysine; alternate. Position 16 is an N6-succinyllysine; alternate (Lys-16). Tyr-24 is modified (phosphotyrosine). The residue at position 35 (Ser-35) is a Phosphoserine. Lys-40 is modified (N6-succinyllysine). Ser-49 bears the Phosphoserine mark. His-58 lines the O2 pocket. Residue His-87 participates in heme b binding. At Ser-102 the chain carries Phosphoserine. Thr-108 is modified (phosphothreonine). Residue Ser-124 is modified to Phosphoserine. 2 positions are modified to phosphothreonine: Thr-134 and Thr-137. Residue Ser-138 is modified to Phosphoserine.

Belongs to the globin family. Heterotetramer of two alpha chains and two beta chains. Red blood cells.

In terms of biological role, involved in oxygen transport from the lung to the various peripheral tissues. Its function is as follows. Hemopressin acts as an antagonist peptide of the cannabinoid receptor CNR1. Hemopressin-binding efficiently blocks cannabinoid receptor CNR1 and subsequent signaling. The sequence is that of Hemoglobin subunit alpha (HBA) from Ctenodactylus gundi (Northern gundi).